A 371-amino-acid chain; its full sequence is Serine/threonine-protein kinase 17B (371 aa).

Residues 33–293 form the Protein kinase domain; that stretch reads TLTPKELGRG…AESCLSHSWL (261 aa). Residues 39–47 and Lys-62 contribute to the ATP site; that span reads LGRGKFAVV. Asp-158 (proton acceptor) is an active-site residue. A disordered region spans residues 308–345; sequence SESSQTQDLSLRSSEDKTPKSCNGSCGDREDKENIPED. Residues 309–319 show a composition bias toward polar residues; it reads ESSQTQDLSLR.

This sequence belongs to the protein kinase superfamily. CAMK Ser/Thr protein kinase family. DAP kinase subfamily. Interacts with CHP1; the interaction induces CHP1 to translocate from the Golgi to the nucleus. In terms of processing, autophosphorylated. As to expression, highly expressed in thymus, spleen, and testis, lower levels present in the brain.

The protein localises to the nucleus. The protein resides in the cell membrane. It is found in the endoplasmic reticulum-Golgi intermediate compartment. The enzyme catalyses L-seryl-[protein] + ATP = O-phospho-L-seryl-[protein] + ADP + H(+). It catalyses the reaction L-threonyl-[protein] + ATP = O-phospho-L-threonyl-[protein] + ADP + H(+). Functionally, acts as a positive regulator of apoptosis. Phosphorylates myosin light chains. This chain is Serine/threonine-protein kinase 17B (Stk17b), found in Rattus norvegicus (Rat).